We begin with the raw amino-acid sequence, 75 residues long: UPF0235 protein MSMEG_3845 (75 aa).

This sequence belongs to the UPF0235 family.

The protein is UPF0235 protein MSMEG_3845 of Mycolicibacterium smegmatis (strain ATCC 700084 / mc(2)155) (Mycobacterium smegmatis).